Here is a 380-residue protein sequence, read N- to C-terminus: Anhydro-N-acetylmuramic acid kinase (380 aa).

9 to 16 (GTSADGVD) contacts ATP.

This sequence belongs to the anhydro-N-acetylmuramic acid kinase family.

It carries out the reaction 1,6-anhydro-N-acetyl-beta-muramate + ATP + H2O = N-acetyl-D-muramate 6-phosphate + ADP + H(+). The protein operates within amino-sugar metabolism; 1,6-anhydro-N-acetylmuramate degradation. It functions in the pathway cell wall biogenesis; peptidoglycan recycling. Catalyzes the specific phosphorylation of 1,6-anhydro-N-acetylmuramic acid (anhMurNAc) with the simultaneous cleavage of the 1,6-anhydro ring, generating MurNAc-6-P. Is required for the utilization of anhMurNAc either imported from the medium or derived from its own cell wall murein, and thus plays a role in cell wall recycling. In Synechococcus sp. (strain CC9902), this protein is Anhydro-N-acetylmuramic acid kinase.